The primary structure comprises 657 residues: Probable potassium transport system protein Kup (657 aa).

12 consecutive transmembrane segments (helical) span residues 15–35, 48–68, 100–120, 147–167, 173–193, 219–239, 251–271, 292–312, 348–368, 378–398, 403–423, and 431–451; these read SFLI…LYVM, ITPD…TLLT, WLII…MLTP, IIII…HFGT, IFGP…IVNL, LGFF…ALYS, LTWP…AAWI, MMPS…AIIA, IYMP…VLYF, YGLS…NYLL, PLPI…SFLI, and KGGF…YIWI.

This sequence belongs to the HAK/KUP transporter (TC 2.A.72) family.

The protein resides in the cell membrane. It catalyses the reaction K(+)(in) + H(+)(in) = K(+)(out) + H(+)(out). Transport of potassium into the cell. Likely operates as a K(+):H(+) symporter. The polypeptide is Probable potassium transport system protein Kup (Clostridium perfringens (strain SM101 / Type A)).